The primary structure comprises 355 residues: Chorismate synthase (355 aa).

R48 is an NADP(+) binding site. FMN contacts are provided by residues 125-127 (RSS), 239-240 (NA), G280, 295-299 (KPVAT), and R321.

This sequence belongs to the chorismate synthase family. In terms of assembly, homotetramer. FMNH2 is required as a cofactor.

The enzyme catalyses 5-O-(1-carboxyvinyl)-3-phosphoshikimate = chorismate + phosphate. It participates in metabolic intermediate biosynthesis; chorismate biosynthesis; chorismate from D-erythrose 4-phosphate and phosphoenolpyruvate: step 7/7. Catalyzes the anti-1,4-elimination of the C-3 phosphate and the C-6 proR hydrogen from 5-enolpyruvylshikimate-3-phosphate (EPSP) to yield chorismate, which is the branch point compound that serves as the starting substrate for the three terminal pathways of aromatic amino acid biosynthesis. This reaction introduces a second double bond into the aromatic ring system. The protein is Chorismate synthase of Flavobacterium psychrophilum (strain ATCC 49511 / DSM 21280 / CIP 103535 / JIP02/86).